Consider the following 554-residue polypeptide: Kinesin-like protein 3 (554 aa).

A Kinesin motor domain is found at 3–325 (SIKVVCRIRP…LRFGHRAKSI (323 aa)). Residues 84-91 (GQTGSGKT) and 233-240 (GSESVGKS) each bind ATP. Residues 446-473 (LSSTKQQLSDLMTALGDAQERYVELVKN) are a coiled coil.

The protein belongs to the TRAFAC class myosin-kinesin ATPase superfamily. Kinesin family.

Its subcellular location is the cytoplasm. It localises to the cytoskeleton. Cytoplasmic motor that could play a role in Golgi membrane recycling. The polypeptide is Kinesin-like protein 3 (klp3) (Schizosaccharomyces pombe (strain 972 / ATCC 24843) (Fission yeast)).